We begin with the raw amino-acid sequence, 352 residues long: UDP-3-O-acylglucosamine N-acyltransferase (352 aa).

Histidine 244 (proton acceptor) is an active-site residue.

This sequence belongs to the transferase hexapeptide repeat family. LpxD subfamily. In terms of assembly, homotrimer.

The catalysed reaction is a UDP-3-O-[(3R)-3-hydroxyacyl]-alpha-D-glucosamine + a (3R)-hydroxyacyl-[ACP] = a UDP-2-N,3-O-bis[(3R)-3-hydroxyacyl]-alpha-D-glucosamine + holo-[ACP] + H(+). It participates in bacterial outer membrane biogenesis; LPS lipid A biosynthesis. Functionally, catalyzes the N-acylation of UDP-3-O-acylglucosamine using 3-hydroxyacyl-ACP as the acyl donor. Is involved in the biosynthesis of lipid A, a phosphorylated glycolipid that anchors the lipopolysaccharide to the outer membrane of the cell. In Leptospira biflexa serovar Patoc (strain Patoc 1 / Ames), this protein is UDP-3-O-acylglucosamine N-acyltransferase.